Consider the following 451-residue polypeptide: Proline--tRNA ligase (451 aa).

Belongs to the class-II aminoacyl-tRNA synthetase family. ProS type 2 subfamily. In terms of assembly, homodimer.

It localises to the cytoplasm. The enzyme catalyses tRNA(Pro) + L-proline + ATP = L-prolyl-tRNA(Pro) + AMP + diphosphate. Its function is as follows. Catalyzes the attachment of proline to tRNA(Pro) in a two-step reaction: proline is first activated by ATP to form Pro-AMP and then transferred to the acceptor end of tRNA(Pro). This Ruegeria sp. (strain TM1040) (Silicibacter sp.) protein is Proline--tRNA ligase.